A 345-amino-acid polypeptide reads, in one-letter code: N-acetyl-gamma-glutamyl-phosphate reductase (345 aa).

Cys-149 is an active-site residue.

The protein belongs to the NAGSA dehydrogenase family. Type 1 subfamily.

It localises to the cytoplasm. It carries out the reaction N-acetyl-L-glutamate 5-semialdehyde + phosphate + NADP(+) = N-acetyl-L-glutamyl 5-phosphate + NADPH + H(+). It functions in the pathway amino-acid biosynthesis; L-arginine biosynthesis; N(2)-acetyl-L-ornithine from L-glutamate: step 3/4. Its function is as follows. Catalyzes the NADPH-dependent reduction of N-acetyl-5-glutamyl phosphate to yield N-acetyl-L-glutamate 5-semialdehyde. This chain is N-acetyl-gamma-glutamyl-phosphate reductase, found in Geobacillus stearothermophilus (Bacillus stearothermophilus).